Here is a 51-residue protein sequence, read N- to C-terminus: Magnetosome protein Mms5 (51 aa).

The Lumenal segment spans residues 1–8; the sequence is MLSAKGVS. The LG region stretch occupies residues 9 to 16; sequence LGLGLGLG. The chain crosses the membrane as a helical span at residues 9–29; the sequence is LGLGLGLGAWGPVLLGVVGVA. Residues 30–51 lie on the Cytoplasmic side of the membrane; that stretch reads GALALYGYYKNRNAEPAAAEAV.

It belongs to the magnetosome MamD/Mms5 family. In terms of processing, may undergo N-terminal cleavage.

It is found in the magnetosome membrane. In terms of biological role, might be involved in magnetite crystal growth. This Magnetospirillum gryphiswaldense (strain DSM 6361 / JCM 21280 / NBRC 15271 / MSR-1) protein is Magnetosome protein Mms5.